The primary structure comprises 113 residues: uncharacterized protein (113 aa).

The next 2 helical transmembrane spans lie at 1 to 21 and 48 to 68; these read MLIAGTLCVCAAVISAVFGTW and IMLAAGGVVALVAVAHTALIV.

To M.tuberculosis Rv0039.

The protein resides in the cell membrane. This is an uncharacterized protein from Mycobacterium leprae (strain TN).